The sequence spans 494 residues: 3-octaprenyl-4-hydroxybenzoate carboxy-lyase (494 aa).

Asn-172 provides a ligand contact to Mn(2+). Residues 175–177 (IYR), 189–191 (RWL), and 194–195 (RG) contribute to the prenylated FMN site. Mn(2+) is bound at residue Glu-238. Residue Asp-287 is the Proton donor of the active site.

Belongs to the UbiD family. In terms of assembly, homohexamer. The cofactor is prenylated FMN. It depends on Mn(2+) as a cofactor.

It localises to the cell membrane. The enzyme catalyses a 4-hydroxy-3-(all-trans-polyprenyl)benzoate + H(+) = a 2-(all-trans-polyprenyl)phenol + CO2. Its pathway is cofactor biosynthesis; ubiquinone biosynthesis. Catalyzes the decarboxylation of 3-octaprenyl-4-hydroxy benzoate to 2-octaprenylphenol, an intermediate step in ubiquinone biosynthesis. This chain is 3-octaprenyl-4-hydroxybenzoate carboxy-lyase, found in Shigella flexneri serotype 5b (strain 8401).